A 468-amino-acid chain; its full sequence is 3-isopropylmalate dehydratase large subunit (468 aa).

Positions 349, 409, and 412 each coordinate [4Fe-4S] cluster.

Belongs to the aconitase/IPM isomerase family. LeuC type 1 subfamily. Heterodimer of LeuC and LeuD. The cofactor is [4Fe-4S] cluster.

It catalyses the reaction (2R,3S)-3-isopropylmalate = (2S)-2-isopropylmalate. The protein operates within amino-acid biosynthesis; L-leucine biosynthesis; L-leucine from 3-methyl-2-oxobutanoate: step 2/4. In terms of biological role, catalyzes the isomerization between 2-isopropylmalate and 3-isopropylmalate, via the formation of 2-isopropylmaleate. This chain is 3-isopropylmalate dehydratase large subunit, found in Nitrobacter hamburgensis (strain DSM 10229 / NCIMB 13809 / X14).